Consider the following 135-residue polypeptide: HTH-type transcriptional regulator DicA (135 aa).

Residues 12 to 66 (IRYRRKNLKHTQRSLAKALKISHVSVSQWERGDSEPTGKNLFALSKVLQCSPTWI) enclose the HTH cro/C1-type domain. The H-T-H motif DNA-binding region spans 23-42 (QRSLAKALKISHVSVSQWER).

Its function is as follows. This protein is a repressor of division inhibition gene dicB. The chain is HTH-type transcriptional regulator DicA (dicA) from Escherichia coli (strain K12).